The sequence spans 856 residues: Lon protease (856 aa).

The Lon N-terminal domain occupies 68 to 261; it reads FPVLPLRDIV…KVLGLMESEI (194 aa). An ATP-binding site is contributed by 412–419; that stretch reads GPPGVGKT. One can recognise a Lon proteolytic domain in the interval 647–828; the sequence is EDQVGVVTGL…DEVLHHALLR (182 aa). Catalysis depends on residues S734 and K777.

It belongs to the peptidase S16 family. As to quaternary structure, homohexamer. Organized in a ring with a central cavity.

The protein localises to the cytoplasm. It carries out the reaction Hydrolysis of proteins in presence of ATP.. ATP-dependent serine protease that mediates the selective degradation of mutant and abnormal proteins as well as certain short-lived regulatory proteins. Required for cellular homeostasis and for survival from DNA damage and developmental changes induced by stress. Degrades polypeptides processively to yield small peptide fragments that are 5 to 10 amino acids long. Binds to DNA in a double-stranded, site-specific manner. The polypeptide is Lon protease (Azorhizobium caulinodans (strain ATCC 43989 / DSM 5975 / JCM 20966 / LMG 6465 / NBRC 14845 / NCIMB 13405 / ORS 571)).